The chain runs to 694 residues: Elongation factor G (694 aa).

The 280-residue stretch at 9 to 288 (SKIRNIGIMA…VIVKWLPSPK (280 aa)) folds into the tr-type G domain. GTP contacts are provided by residues 18–25 (AHIDAGKT), 82–86 (DTPGH), and 136–139 (NKMD).

It belongs to the TRAFAC class translation factor GTPase superfamily. Classic translation factor GTPase family. EF-G/EF-2 subfamily.

The protein resides in the cytoplasm. Its function is as follows. Catalyzes the GTP-dependent ribosomal translocation step during translation elongation. During this step, the ribosome changes from the pre-translocational (PRE) to the post-translocational (POST) state as the newly formed A-site-bound peptidyl-tRNA and P-site-bound deacylated tRNA move to the P and E sites, respectively. Catalyzes the coordinated movement of the two tRNA molecules, the mRNA and conformational changes in the ribosome. The sequence is that of Elongation factor G from Chlamydia felis (strain Fe/C-56) (Chlamydophila felis).